Reading from the N-terminus, the 213-residue chain is Peroxisomal protein 2 (213 aa).

A Peroxisomal target signal 1 (PTS1) motif is present at residues 211-213 (ETL).

This sequence belongs to the PXP2 family.

The protein resides in the peroxisome matrix. It localises to the cytoplasm. It is found in the cytosol. The protein localises to the nucleus. Probably involved in peroxisome formation or maintenance as well as in amino acid metabolism. The protein is Peroxisomal protein 2 of Schizosaccharomyces pombe (strain 972 / ATCC 24843) (Fission yeast).